Consider the following 119-residue polypeptide: Inner membrane protein YijD (119 aa).

Residues Met1 to Arg8 are Cytoplasmic-facing. A helical membrane pass occupies residues Gly9–Leu28. Over Phe29–Ser31 the chain is Periplasmic. A helical transmembrane segment spans residues Ile32–Leu50. At His51 to Val61 the chain is on the cytoplasmic side. A helical transmembrane segment spans residues Gly62 to Ala84. Residues Glu85–Asp88 are Periplasmic-facing. The helical transmembrane segment at Ile89–Ala108 threads the bilayer. Topologically, residues Lys109 to Glu119 are cytoplasmic.

The protein localises to the cell inner membrane. The protein is Inner membrane protein YijD (yijD) of Escherichia coli O6:H1 (strain CFT073 / ATCC 700928 / UPEC).